Consider the following 504-residue polypeptide: MSILAGFKNLLKHSKSSKGRSNASKSVDVSVNRDVAAYTELAAKNVNAGGDEEIRVANYPGLEKYQLIENLGDGAFSQVYKAYSIDRKEHVAVKVIRKYEMNKKQRQGVFKEVNIMRRVKHKNVVNLFDFVETEDFYHLVMELAEGGELFHQIVNFTYFSENLARHIIIQVAEAVKHLHDVCGIVHRDIKPENLLFQPIEYLPSQNYTPPSLEPNKLDEGMFLEGIGAGGIGRILIADFGFSKVVWNSKTATPCGTVGYAAPEIVNDELYSKNVDMWAMGCVLHTMLCGFPPFFDENIKDLASKVVNGEFEFLSPWWDDISDSAKDLITHLLTVDPRERYDIHQFFQHPWIKGESKMPENFTYKPKLHGTPGGPKLSLPRSLVSKGEIDIPTTPIKSATHPLLSSYSEPKTPGVSSVHEAMGVAYDIRRLNHLGFSPEQLSKKSMNTGSIKELILDEETTTDDDDYIISSFPLNDTLGSEGKDPFSLNLKESSLYSRRSAKRVN.

Residues 65–351 (YQLIENLGDG…IHQFFQHPWI (287 aa)) enclose the Protein kinase domain. ATP contacts are provided by residues 71-79 (LGDGAFSQV) and lysine 94. The active-site Proton acceptor is aspartate 188. Position 252 is a phosphothreonine (threonine 252).

It belongs to the protein kinase superfamily. CAMK Ser/Thr protein kinase family. CaMK subfamily. As to quaternary structure, interacts with sty1. The cofactor is Mg(2+). Post-translationally, autophosphorylated.

Its subcellular location is the cytoplasm. It is found in the barrier septum. It localises to the forespore membrane. The protein localises to the ascus epiplasm. The enzyme catalyses L-seryl-[protein] + ATP = O-phospho-L-seryl-[protein] + ADP + H(+). It catalyses the reaction L-threonyl-[protein] + ATP = O-phospho-L-threonyl-[protein] + ADP + H(+). Has a role in the regulation of G2/M transition during the mitotic cell cycle. In Schizosaccharomyces pombe (strain 972 / ATCC 24843) (Fission yeast), this protein is Calcium/calmodulin-dependent protein kinase type II.